Consider the following 477-residue polypeptide: Bifunctional protein HldE (477 aa).

The tract at residues methionine 1–threonine 318 is ribokinase. An N6-acetyllysine modification is found at lysine 179. Asparagine 195 to glutamate 198 contributes to the ATP binding site. Aspartate 264 is an active-site residue. A cytidylyltransferase region spans residues methionine 344–glycine 477.

The protein in the N-terminal section; belongs to the carbohydrate kinase PfkB family. It in the C-terminal section; belongs to the cytidylyltransferase family. As to quaternary structure, homodimer.

The catalysed reaction is D-glycero-beta-D-manno-heptose 7-phosphate + ATP = D-glycero-beta-D-manno-heptose 1,7-bisphosphate + ADP + H(+). The enzyme catalyses D-glycero-beta-D-manno-heptose 1-phosphate + ATP + H(+) = ADP-D-glycero-beta-D-manno-heptose + diphosphate. The protein operates within nucleotide-sugar biosynthesis; ADP-L-glycero-beta-D-manno-heptose biosynthesis; ADP-L-glycero-beta-D-manno-heptose from D-glycero-beta-D-manno-heptose 7-phosphate: step 1/4. Its pathway is nucleotide-sugar biosynthesis; ADP-L-glycero-beta-D-manno-heptose biosynthesis; ADP-L-glycero-beta-D-manno-heptose from D-glycero-beta-D-manno-heptose 7-phosphate: step 3/4. It participates in bacterial outer membrane biogenesis; LPS core biosynthesis. Functionally, catalyzes the phosphorylation of D-glycero-D-manno-heptose 7-phosphate at the C-1 position to selectively form D-glycero-beta-D-manno-heptose-1,7-bisphosphate. Catalyzes the ADP transfer from ATP to D-glycero-beta-D-manno-heptose 1-phosphate, yielding ADP-D-glycero-beta-D-manno-heptose. In Shigella flexneri, this protein is Bifunctional protein HldE.